Here is a 194-residue protein sequence, read N- to C-terminus: HTH-type transcriptional regulator BetI (194 aa).

The HTH tetR-type domain maps to 8–68 (EIRRAQLIDA…ATMRHVLRDL (61 aa)). The H-T-H motif DNA-binding region spans 31-50 (TLASVAQRANISTGIVSHYF).

It functions in the pathway amine and polyamine biosynthesis; betaine biosynthesis via choline pathway [regulation]. Functionally, repressor involved in the biosynthesis of the osmoprotectant glycine betaine. It represses transcription of the choline transporter BetT and the genes of BetAB involved in the synthesis of glycine betaine. This chain is HTH-type transcriptional regulator BetI, found in Burkholderia cenocepacia (strain ATCC BAA-245 / DSM 16553 / LMG 16656 / NCTC 13227 / J2315 / CF5610) (Burkholderia cepacia (strain J2315)).